The primary structure comprises 370 residues: Phosphate acyltransferase (370 aa).

Positions 349 to 370 are disordered; that stretch reads SAGRAGQDAPDEMAAPGRSEKR.

This sequence belongs to the PlsX family. Homodimer. Probably interacts with PlsY.

It localises to the cytoplasm. It catalyses the reaction a fatty acyl-[ACP] + phosphate = an acyl phosphate + holo-[ACP]. It functions in the pathway lipid metabolism; phospholipid metabolism. Functionally, catalyzes the reversible formation of acyl-phosphate (acyl-PO(4)) from acyl-[acyl-carrier-protein] (acyl-ACP). This enzyme utilizes acyl-ACP as fatty acyl donor, but not acyl-CoA. The sequence is that of Phosphate acyltransferase from Cereibacter sphaeroides (strain ATCC 17023 / DSM 158 / JCM 6121 / CCUG 31486 / LMG 2827 / NBRC 12203 / NCIMB 8253 / ATH 2.4.1.) (Rhodobacter sphaeroides).